The following is a 237-amino-acid chain: Ribosomal RNA small subunit methyltransferase G (237 aa).

Residues Gly-76, Phe-81, 128-129, and Arg-147 each bind S-adenosyl-L-methionine; that span reads IE.

The protein belongs to the methyltransferase superfamily. RNA methyltransferase RsmG family.

Its subcellular location is the cytoplasm. Functionally, specifically methylates the N7 position of a guanine in 16S rRNA. The polypeptide is Ribosomal RNA small subunit methyltransferase G (Prochlorococcus marinus (strain MIT 9301)).